The primary structure comprises 71 residues: Large ribosomal subunit protein bL31 (71 aa).

It belongs to the bacterial ribosomal protein bL31 family. Type A subfamily. In terms of assembly, part of the 50S ribosomal subunit.

Binds the 23S rRNA. The chain is Large ribosomal subunit protein bL31 from Metamycoplasma arthritidis (strain 158L3-1) (Mycoplasma arthritidis).